The chain runs to 217 residues: Protein-L-isoaspartate O-methyltransferase (217 aa).

Residue Ser59 is part of the active site.

Belongs to the methyltransferase superfamily. L-isoaspartyl/D-aspartyl protein methyltransferase family.

It localises to the cytoplasm. The catalysed reaction is [protein]-L-isoaspartate + S-adenosyl-L-methionine = [protein]-L-isoaspartate alpha-methyl ester + S-adenosyl-L-homocysteine. In terms of biological role, catalyzes the methyl esterification of L-isoaspartyl residues in peptides and proteins that result from spontaneous decomposition of normal L-aspartyl and L-asparaginyl residues. It plays a role in the repair and/or degradation of damaged proteins. The chain is Protein-L-isoaspartate O-methyltransferase (pcm) from Methanothermobacter thermautotrophicus (strain ATCC 29096 / DSM 1053 / JCM 10044 / NBRC 100330 / Delta H) (Methanobacterium thermoautotrophicum).